A 208-amino-acid polypeptide reads, in one-letter code: Putative 3-methyladenine DNA glycosylase (208 aa).

It belongs to the DNA glycosylase MPG family.

The polypeptide is Putative 3-methyladenine DNA glycosylase (Prosthecochloris aestuarii (strain DSM 271 / SK 413)).